Reading from the N-terminus, the 185-residue chain is Dihydrofolate reductase (185 aa).

One can recognise a DHFR domain in the interval 5-184; it reads KLNLIAAACD…ISYYFRVYKK (180 aa). NADP(+) contacts are provided by residues alanine 11 and 17–23; that span reads GIGVNGA. 31–36 is a binding site for substrate; sequence EMAYFT. 55 to 57 lines the NADP(+) pocket; the sequence is RRT. Arginine 71 lines the substrate pocket. NADP(+) contacts are provided by residues 77-79 and 117-124; these read THN and GGSSIYRA.

This sequence belongs to the dihydrofolate reductase family.

The enzyme catalyses (6S)-5,6,7,8-tetrahydrofolate + NADP(+) = 7,8-dihydrofolate + NADPH + H(+). Its pathway is cofactor biosynthesis; tetrahydrofolate biosynthesis; 5,6,7,8-tetrahydrofolate from 7,8-dihydrofolate: step 1/1. With respect to regulation, activated by dithiothreitol and p-chloromercuribenzoate. Inhibited by trimethoprim, methotrexate, sodium tetrathionate and hydroxymercuribenzoate. Key enzyme in folate metabolism. Catalyzes an essential reaction for de novo glycine and purine synthesis, and for DNA precursor synthesis. The chain is Dihydrofolate reductase (DHFR) from Heliothis virescens (Tobacco budworm moth).